The chain runs to 244 residues: Ribosomal RNA large subunit methyltransferase E (244 aa).

Positions 81, 83, 109, 125, and 149 each coordinate S-adenosyl-L-methionine. The Proton acceptor role is filled by Lys189.

This sequence belongs to the class I-like SAM-binding methyltransferase superfamily. RNA methyltransferase RlmE family.

It localises to the cytoplasm. The catalysed reaction is uridine(2552) in 23S rRNA + S-adenosyl-L-methionine = 2'-O-methyluridine(2552) in 23S rRNA + S-adenosyl-L-homocysteine + H(+). Functionally, specifically methylates the uridine in position 2552 of 23S rRNA at the 2'-O position of the ribose in the fully assembled 50S ribosomal subunit. In Cereibacter sphaeroides (strain ATCC 17023 / DSM 158 / JCM 6121 / CCUG 31486 / LMG 2827 / NBRC 12203 / NCIMB 8253 / ATH 2.4.1.) (Rhodobacter sphaeroides), this protein is Ribosomal RNA large subunit methyltransferase E.